The primary structure comprises 424 residues: Histidine--tRNA ligase (424 aa).

Belongs to the class-II aminoacyl-tRNA synthetase family. As to quaternary structure, homodimer.

The protein resides in the cytoplasm. The catalysed reaction is tRNA(His) + L-histidine + ATP = L-histidyl-tRNA(His) + AMP + diphosphate + H(+). The sequence is that of Histidine--tRNA ligase from Protochlamydia amoebophila (strain UWE25).